Reading from the N-terminus, the 229-residue chain is Putative N-acetylmannosamine-6-phosphate 2-epimerase (229 aa).

The protein belongs to the NanE family.

The enzyme catalyses an N-acyl-D-glucosamine 6-phosphate = an N-acyl-D-mannosamine 6-phosphate. It functions in the pathway amino-sugar metabolism; N-acetylneuraminate degradation; D-fructose 6-phosphate from N-acetylneuraminate: step 3/5. In terms of biological role, converts N-acetylmannosamine-6-phosphate (ManNAc-6-P) to N-acetylglucosamine-6-phosphate (GlcNAc-6-P). This Escherichia coli O127:H6 (strain E2348/69 / EPEC) protein is Putative N-acetylmannosamine-6-phosphate 2-epimerase.